The sequence spans 179 residues: ATP synthase subunit delta (179 aa).

This sequence belongs to the ATPase delta chain family. F-type ATPases have 2 components, F(1) - the catalytic core - and F(0) - the membrane proton channel. F(1) has five subunits: alpha(3), beta(3), gamma(1), delta(1), epsilon(1). F(0) has three main subunits: a(1), b(2) and c(10-14). The alpha and beta chains form an alternating ring which encloses part of the gamma chain. F(1) is attached to F(0) by a central stalk formed by the gamma and epsilon chains, while a peripheral stalk is formed by the delta and b chains.

The protein localises to the cell membrane. In terms of biological role, f(1)F(0) ATP synthase produces ATP from ADP in the presence of a proton or sodium gradient. F-type ATPases consist of two structural domains, F(1) containing the extramembraneous catalytic core and F(0) containing the membrane proton channel, linked together by a central stalk and a peripheral stalk. During catalysis, ATP synthesis in the catalytic domain of F(1) is coupled via a rotary mechanism of the central stalk subunits to proton translocation. Functionally, this protein is part of the stalk that links CF(0) to CF(1). It either transmits conformational changes from CF(0) to CF(1) or is implicated in proton conduction. The polypeptide is ATP synthase subunit delta (Staphylococcus aureus (strain Mu50 / ATCC 700699)).